A 302-amino-acid chain; its full sequence is Probable 2-(5''-triphosphoribosyl)-3'-dephosphocoenzyme-A synthase (302 aa).

This sequence belongs to the CitG/MdcB family.

It carries out the reaction 3'-dephospho-CoA + ATP = 2'-(5''-triphospho-alpha-D-ribosyl)-3'-dephospho-CoA + adenine. This Salmonella gallinarum (strain 287/91 / NCTC 13346) protein is Probable 2-(5''-triphosphoribosyl)-3'-dephosphocoenzyme-A synthase.